We begin with the raw amino-acid sequence, 379 residues long: Succinate--CoA ligase [ADP-forming] subunit beta (379 aa).

The 229-residue stretch at 9-237 (RDILARYGIP…SSDEPEAEQR (229 aa)) folds into the ATP-grasp domain. ATP is bound by residues Lys45, 52-54 (GRG), Ile94, and Glu99. The Mg(2+) site is built by Asn192 and Asp206. Substrate contacts are provided by residues Asn257 and 314–316 (GIT).

Belongs to the succinate/malate CoA ligase beta subunit family. Heterotetramer of two alpha and two beta subunits. The cofactor is Mg(2+).

The enzyme catalyses succinate + ATP + CoA = succinyl-CoA + ADP + phosphate. It catalyses the reaction GTP + succinate + CoA = succinyl-CoA + GDP + phosphate. It functions in the pathway carbohydrate metabolism; tricarboxylic acid cycle; succinate from succinyl-CoA (ligase route): step 1/1. Its function is as follows. Succinyl-CoA synthetase functions in the citric acid cycle (TCA), coupling the hydrolysis of succinyl-CoA to the synthesis of either ATP or GTP and thus represents the only step of substrate-level phosphorylation in the TCA. The beta subunit provides nucleotide specificity of the enzyme and binds the substrate succinate, while the binding sites for coenzyme A and phosphate are found in the alpha subunit. The chain is Succinate--CoA ligase [ADP-forming] subunit beta from Roseiflexus sp. (strain RS-1).